The sequence spans 383 residues: GTP-binding protein 10 homolog (383 aa).

An Obg domain is found at Pro22–Ile157. An OBG-type G domain is found at Ala158 to Val353. GTP contacts are provided by residues Gly164–Ser171, Asp211–Leu215, and Asn287–Asp290.

It belongs to the TRAFAC class OBG-HflX-like GTPase superfamily. OBG GTPase family.

Its subcellular location is the nucleus. It is found in the nucleolus. May be involved in the ribosome maturation process. In Drosophila pseudoobscura pseudoobscura (Fruit fly), this protein is GTP-binding protein 10 homolog.